The chain runs to 194 residues: Phosphoheptose isomerase (194 aa).

One can recognise an SIS domain in the interval 37–194 (ISNSFKQGGK…LIEFEMAKQA (158 aa)). 52-54 (NGG) is a substrate binding site. Zn(2+) is bound by residues H61 and E65. Substrate is bound by residues E65, 93-94 (ND), 119-121 (STS), S124, and Q172. Positions 172 and 180 each coordinate Zn(2+).

Belongs to the SIS family. GmhA subfamily. In terms of assembly, homotetramer. The cofactor is Zn(2+).

The protein resides in the cytoplasm. It carries out the reaction 2 D-sedoheptulose 7-phosphate = D-glycero-alpha-D-manno-heptose 7-phosphate + D-glycero-beta-D-manno-heptose 7-phosphate. It functions in the pathway carbohydrate biosynthesis; D-glycero-D-manno-heptose 7-phosphate biosynthesis; D-glycero-alpha-D-manno-heptose 7-phosphate and D-glycero-beta-D-manno-heptose 7-phosphate from sedoheptulose 7-phosphate: step 1/1. Functionally, catalyzes the isomerization of sedoheptulose 7-phosphate in D-glycero-D-manno-heptose 7-phosphate. The chain is Phosphoheptose isomerase from Actinobacillus pleuropneumoniae serotype 5b (strain L20).